The following is a 244-amino-acid chain: Ribonuclease 3 (244 aa).

Positions 7-134 (FEEVEKTLNI…IIAAIYIDSG (128 aa)) constitute an RNase III domain. Position 47 (E47) interacts with Mg(2+). D51 is an active-site residue. Mg(2+) is bound by residues N120 and E123. The active site involves E123. In terms of domain architecture, DRBM spans 161–230 (DYKTNLQEIV…AQDALKKLKS (70 aa)).

This sequence belongs to the ribonuclease III family. As to quaternary structure, homodimer. The cofactor is Mg(2+).

It is found in the cytoplasm. The catalysed reaction is Endonucleolytic cleavage to 5'-phosphomonoester.. Its function is as follows. Digests double-stranded RNA. Involved in the processing of primary rRNA transcript to yield the immediate precursors to the large and small rRNAs (23S and 16S). Processes some mRNAs, and tRNAs when they are encoded in the rRNA operon. Processes pre-crRNA and tracrRNA of type II CRISPR loci if present in the organism. The polypeptide is Ribonuclease 3 (Clostridium kluyveri (strain NBRC 12016)).